Reading from the N-terminus, the 39-residue chain is Phospholipase A2 (39 aa).

His-36 is a catalytic residue.

It belongs to the phospholipase A2 family. Group III subfamily. The cofactor is Ca(2+). In terms of tissue distribution, expressed by the venom gland.

It is found in the secreted. It carries out the reaction a 1,2-diacyl-sn-glycero-3-phosphocholine + H2O = a 1-acyl-sn-glycero-3-phosphocholine + a fatty acid + H(+). Functionally, PLA2 catalyzes the calcium-dependent hydrolysis of the 2-acyl groups in 3-sn-phosphoglycerides. The chain is Phospholipase A2 from Heloderma horridum horridum (Mexican beaded lizard).